A 505-amino-acid chain; its full sequence is Pleckstrin homology domain-containing family D member 1 (505 aa).

Residues 28 to 136 enclose the PH domain; it reads KVQLYGVLWK…WLEMLQESGK (109 aa). The stretch at 146–391 forms a coiled coil; sequence EAMIKSLEAQ…KVRNKEKEER (246 aa). The disordered stretch occupies residues 264–284; that stretch reads DKNQPQPLTNQSEQPPASDGL. Residues 267-278 are compositionally biased toward polar residues; the sequence is QPQPLTNQSEQP. Arginine 502 carries the post-translational modification Omega-N-methylarginine.

Belongs to the PLEKHD1 family.

This Mus musculus (Mouse) protein is Pleckstrin homology domain-containing family D member 1 (Plekhd1).